We begin with the raw amino-acid sequence, 196 residues long: ATP-dependent Clp protease proteolytic subunit (196 aa).

The active-site Nucleophile is Ser98. The active site involves His123.

Belongs to the peptidase S14 family. As to quaternary structure, fourteen ClpP subunits assemble into 2 heptameric rings which stack back to back to give a disk-like structure with a central cavity, resembling the structure of eukaryotic proteasomes.

The protein resides in the cytoplasm. The catalysed reaction is Hydrolysis of proteins to small peptides in the presence of ATP and magnesium. alpha-casein is the usual test substrate. In the absence of ATP, only oligopeptides shorter than five residues are hydrolyzed (such as succinyl-Leu-Tyr-|-NHMec, and Leu-Tyr-Leu-|-Tyr-Trp, in which cleavage of the -Tyr-|-Leu- and -Tyr-|-Trp bonds also occurs).. Cleaves peptides in various proteins in a process that requires ATP hydrolysis. Has a chymotrypsin-like activity. Plays a major role in the degradation of misfolded proteins. In Lactiplantibacillus plantarum (strain ATCC BAA-793 / NCIMB 8826 / WCFS1) (Lactobacillus plantarum), this protein is ATP-dependent Clp protease proteolytic subunit.